Here is a 330-residue protein sequence, read N- to C-terminus: Tyrosine-protein phosphatase yvh1 (330 aa).

One can recognise a Tyrosine-protein phosphatase domain in the interval 45 to 187 (NDLSEISKNL…LRVYFECNYQ (143 aa)). Catalysis depends on Cys-131, which acts as the Phosphocysteine intermediate.

This sequence belongs to the protein-tyrosine phosphatase family. Non-receptor class dual specificity subfamily.

The protein resides in the cytoplasm. It is found in the nucleus. It catalyses the reaction O-phospho-L-tyrosyl-[protein] + H2O = L-tyrosyl-[protein] + phosphate. May be directly involved in signal transduction and/or cell cycle regulation. It is necessary for maintaining growth rate or spore germination. Could show both activity toward tyrosine-protein phosphate as well as with serine-protein phosphate. The protein is Tyrosine-protein phosphatase yvh1 (yvh1) of Schizosaccharomyces pombe (strain 972 / ATCC 24843) (Fission yeast).